We begin with the raw amino-acid sequence, 273 residues long: Dermonecrotic toxin LdSicTox-alphaIB1bii (273 aa).

His-5 is an active-site residue. The Mg(2+) site is built by Glu-25 and Asp-27. His-41 serves as the catalytic Nucleophile. 2 cysteine pairs are disulfide-bonded: Cys-45-Cys-51 and Cys-47-Cys-190. Asp-85 is a Mg(2+) binding site. A glycan (N-linked (GlcNAc...) asparagine) is linked at Asn-250.

Belongs to the arthropod phospholipase D family. Class II subfamily. The cofactor is Mg(2+). In terms of tissue distribution, expressed by the venom gland.

It localises to the secreted. It catalyses the reaction an N-(acyl)-sphingosylphosphocholine = an N-(acyl)-sphingosyl-1,3-cyclic phosphate + choline. The catalysed reaction is an N-(acyl)-sphingosylphosphoethanolamine = an N-(acyl)-sphingosyl-1,3-cyclic phosphate + ethanolamine. The enzyme catalyses a 1-acyl-sn-glycero-3-phosphocholine = a 1-acyl-sn-glycero-2,3-cyclic phosphate + choline. It carries out the reaction a 1-acyl-sn-glycero-3-phosphoethanolamine = a 1-acyl-sn-glycero-2,3-cyclic phosphate + ethanolamine. Dermonecrotic toxins cleave the phosphodiester linkage between the phosphate and headgroup of certain phospholipids (sphingolipid and lysolipid substrates), forming an alcohol (often choline) and a cyclic phosphate. This toxin acts on sphingomyelin (SM). It may also act on ceramide phosphoethanolamine (CPE), lysophosphatidylcholine (LPC) and lysophosphatidylethanolamine (LPE), but not on lysophosphatidylserine (LPS), and lysophosphatidylglycerol (LPG). It acts by transphosphatidylation, releasing exclusively cyclic phosphate products as second products. Induces dermonecrosis, hemolysis, increased vascular permeability, edema, inflammatory response, and platelet aggregation. The protein is Dermonecrotic toxin LdSicTox-alphaIB1bii of Loxosceles deserta (Desert recluse spider).